Consider the following 159-residue polypeptide: Phosphopantetheine adenylyltransferase (159 aa).

His16 provides a ligand contact to ATP. Lys40, Met72, and Arg86 together coordinate substrate. ATP contacts are provided by residues 87-89, Glu97, and 122-128; these read GLR and YQYLSAS.

It belongs to the bacterial CoaD family. Homohexamer. The cofactor is Mg(2+).

Its subcellular location is the cytoplasm. The enzyme catalyses (R)-4'-phosphopantetheine + ATP + H(+) = 3'-dephospho-CoA + diphosphate. It functions in the pathway cofactor biosynthesis; coenzyme A biosynthesis; CoA from (R)-pantothenate: step 4/5. In terms of biological role, reversibly transfers an adenylyl group from ATP to 4'-phosphopantetheine, yielding dephospho-CoA (dPCoA) and pyrophosphate. The polypeptide is Phosphopantetheine adenylyltransferase (Dehalococcoides mccartyi (strain ATCC BAA-2100 / JCM 16839 / KCTC 5957 / BAV1)).